Consider the following 44-residue polypeptide: Small hydrophobic protein (44 aa).

The Intravirion segment spans residues 1-16 (MLPDPEDPESKKATRR). The chain crosses the membrane as a helical; Signal-anchor for type II membrane protein span at residues 17–37 (AGNLIICFLFIFFLFVTFIVP). Residues 38 to 44 (TLRHLLS) lie on the Virion surface side of the membrane.

It belongs to the rubulavirus small hydrophobic protein family.

The protein resides in the virion membrane. Its subcellular location is the host cell membrane. Functionally, inhibits TNF-alpha signaling and seems to block apoptosis in host infected cells. The polypeptide is Small hydrophobic protein (SH) (Parainfluenza virus 5 (strain W3) (PIV5)).